Consider the following 45-residue polypeptide: Bomanin Short 2 (45 aa).

Residues Met-1–Ala-20 form the signal peptide. The propeptide at Val-21 to Pro-27 is removed by a dipeptidylpeptidase. Cys-36 and Cys-39 are joined by a disulfide. Gly-43 bears the Glycine amide mark.

In terms of tissue distribution, hemolymph (at protein level).

The protein resides in the secreted. Its function is as follows. Secreted immune-induced peptide induced by Toll signaling. Has a role in resistance to bacterial and fungal infections. In Drosophila melanogaster (Fruit fly), this protein is Bomanin Short 2.